The primary structure comprises 41 residues: Large ribosomal subunit protein bL36 (41 aa).

This sequence belongs to the bacterial ribosomal protein bL36 family.

The sequence is that of Large ribosomal subunit protein bL36 from Neisseria gonorrhoeae (strain ATCC 700825 / FA 1090).